The primary structure comprises 219 residues: Small ribosomal subunit protein uS3 (219 aa).

The KH type-2 domain occupies 38-106 (IREYITARLK…RVHINILEVK (69 aa)).

This sequence belongs to the universal ribosomal protein uS3 family. In terms of assembly, part of the 30S ribosomal subunit. Forms a tight complex with proteins S10 and S14.

Its function is as follows. Binds the lower part of the 30S subunit head. Binds mRNA in the 70S ribosome, positioning it for translation. The polypeptide is Small ribosomal subunit protein uS3 (Bacillus cytotoxicus (strain DSM 22905 / CIP 110041 / 391-98 / NVH 391-98)).